Consider the following 264-residue polypeptide: MNASCAALWSLGSSRMATRAQFESSNEVGVFAKLTNSYCLVALGGSEHFYSTLEAELAPHIPVVHATVGGTRVIGRVCVGNRRGLIVPSITTDQELQHLRNSLPDSVEIRRVEERLSALGNNVACNDYVALLHTDMDKETEEIVQDVLGVEAFRATIGKQTLVGSYCHFTNQGGLVHVMTPVEDMEELSQLLQVPLTAGTVNRGSDLVGAGLIANDWAAFCGMDTTATELAVVERIFKIATRNQQKLNLVDDLTLRSSLIDTLS.

It belongs to the eIF-6 family. Monomer. Associates with the 60S ribosomal subunit.

The protein localises to the cytoplasm. Its subcellular location is the nucleus. It is found in the nucleolus. Its function is as follows. Binds to the 60S ribosomal subunit and prevents its association with the 40S ribosomal subunit to form the 80S initiation complex in the cytoplasm. May also be involved in ribosome biogenesis. The polypeptide is Eukaryotic translation initiation factor 6 (Toxoplasma gondii (strain ATCC 50861 / VEG)).